We begin with the raw amino-acid sequence, 348 residues long: Guanine nucleotide-binding protein alpha-13 subunit (348 aa).

The N-myristoyl glycine moiety is linked to residue Gly2. The S-palmitoyl cysteine moiety is linked to residue Cys3. The G-alpha domain maps to 34-348 (SHIRLLLLGS…VFKDIAKRKK (315 aa)). Positions 37–50 (RLLLLGSAESGKTT) are G1 motif. GTP-binding positions include 42–49 (GSAESGKT), 176–182 (IMAYVPT), 201–205 (DIGGQ), 270–273 (NEID), and Ala326. The tract at residues 174 to 182 (DLIMAYVPT) is G2 motif. Thr182 provides a ligand contact to Mg(2+). Positions 197 to 206 (FQLFDIGGQK) are G3 motif. Residues 266 to 273 (YLFLNEID) form a G4 motif region. Residues 324-329 (CIAIDT) form a G5 motif region.

Belongs to the G-alpha family. In terms of assembly, g proteins are composed of 3 units; alpha, beta and gamma. The alpha chain contains the guanine nucleotide binding site.

In terms of biological role, guanine nucleotide-binding proteins (G proteins) are involved as modulators or transducers in various transmembrane signaling systems. In Caenorhabditis elegans, this protein is Guanine nucleotide-binding protein alpha-13 subunit (gpa-13).